Reading from the N-terminus, the 726-residue chain is L-lysine 6-oxidase (726 aa).

The segment at residues 516 to 581 (CTIQTVNFSE…LPPAYYSYWW (66 aa)) is a cross-link (4'-cysteinyl-tryptophylquinone (Cys-Trp)). Tryptophylquinone is present on W581.

In terms of assembly, homotetramer. Cysteine tryptophylquinone residue is required as a cofactor. In terms of processing, the cysteine tryptophylquinone (CTQ) is generated by oxidation of the indole ring of a tryptophan residue to form tryptophylquinone, followed by covalent cross-linking with a cysteine residue.

It is found in the secreted. The catalysed reaction is L-lysine + O2 + H2O = (S)-2-amino-6-oxohexanoate + H2O2 + NH4(+). With respect to regulation, inhibited by aminoguanidine, amiloride and beta-aminopropionitrile. In terms of biological role, has antibacterial activity against a wide spectrum of Gram-positive and Gram-negative bacteria including nosocomial isolates of S.aureus and Pseudomonas sp. The antimicrobial activity is due to hydrogen peroxide generated by its lysine oxidase activity. Also has autotoxic activity. Involved in biofilm differentiation; responsible for cell death within microcolonies during biofilm development which is linked to the generation of a phenotypically diverse dispersal population and thus may play a role in colonization. The sequence is that of L-lysine 6-oxidase (lodA) from Marinomonas mediterranea (strain ATCC 700492 / JCM 21426 / NBRC 103028 / MMB-1).